The sequence spans 416 residues: cAMP-dependent protein kinase type II-beta regulatory subunit (416 aa).

Positions 2-151 (SIEIPAGLTE…RLQEACKDIL (150 aa)) are dimerization and phosphorylation. Residues 53–97 (HEGRTWGDAGAAAGGGTPSKGVNFAEEPMRSDSENGEEEEAAEAG) form a disordered region. A Phosphothreonine modification is found at Thr69. 3 positions are modified to phosphoserine: Ser83, Ser85, and Ser112. 3',5'-cyclic AMP-binding positions include 152-273 (LFKN…ESLP), Glu221, Arg230, 274-416 (FLKS…EPTA), Glu350, and Arg359.

Belongs to the cAMP-dependent kinase regulatory chain family. The inactive form of the enzyme is composed of two regulatory chains and two catalytic chains. Activation by cAMP produces two active catalytic monomers and a regulatory dimer that binds four cAMP molecules. Interacts with PRKACA and PRKACB. Interacts with the phosphorylated form of PJA2. Forms a complex composed of PRKAR2B, GSK3B and GSKIP through GSKIP interaction; facilitates PKA-induced phosphorylation and regulates GSK3B activity. Phosphorylated by the activated catalytic chain. As to expression, four types of regulatory chains are found: I-alpha, I-beta, II-alpha, and II-beta. Their expression varies among tissues and is in some cases constitutive and in others inducible. Brain. Present in a few pyramidal neurons and mostly in mossy fibers. Colocalizes with PJA2 in dentate granule cells and at postsynaptic sites of primary hippocampal neurons.

Its subcellular location is the cytoplasm. The protein localises to the cell membrane. Regulatory subunit of the cAMP-dependent protein kinases involved in cAMP signaling in cells. Type II regulatory chains mediate membrane association by binding to anchoring proteins, including the MAP2 kinase. In Rattus norvegicus (Rat), this protein is cAMP-dependent protein kinase type II-beta regulatory subunit (Prkar2b).